We begin with the raw amino-acid sequence, 297 residues long: MEEFDSEDFSTSEEDEDYVPSGGEYSEDDINELVKEDEVDGEEETQKTKGTKRKAESVLARKRKQGGLSLEEDEEDANEESGGSSSEEEDAATEQQKGVESEDARKKKEDELWASFLNDVGPKSKVPPSTHVKTGEETEETSSSHLVKAERLEKPKETEKVKITKVFDFAGEEVRVIKEVDATSKEAKSFFKQNEKEKPQSNVPPAVPSLPAGSGLKRSSGMSSLLGKIGAKKQKMSTLEKSKLDWESFKEEEGIGEELAIHNRGKEGYIERKAFLDRVDHRQFEIERDLRLSKMKP.

Acidic residues-rich tracts occupy residues 1–18 (MEEFDSEDFSTSEEDEDY), 25–43 (YSEDDINELVKEDEVDGEE), and 70–79 (LEEDEEDANE). Disordered regions lie at residues 1–157 (MEEF…KPKE) and 190–222 (FFKQNEKEKPQSNVPPAVPSLPAGSGLKRSSGM). Residues Ser81, Ser84, and Ser85 each carry the phosphoserine modification. Residues 97–111 (KGVESEDARKKKEDE) are compositionally biased toward basic and acidic residues. Ser115 is modified (phosphoserine). 2 stretches are compositionally biased toward basic and acidic residues: residues 147–157 (VKAERLEKPKE) and 190–199 (FFKQNEKEKP). A Glycyl lysine isopeptide (Lys-Gly) (interchain with G-Cter in SUMO2) cross-link involves residue Lys148. Positions 176-215 (VIKEVDATSKEAKSFFKQNEKEKPQSNVPPAVPSLPAGSG) are hydrophilic. The residue at position 214 (Ser214) is a Phosphoserine. One can recognise a BCNT-C domain in the interval 216–297 (LKRSSGMSSL…RDLRLSKMKP (82 aa)). Lys217 carries the post-translational modification N6-methyllysine. Position 248 is a phosphoserine (Ser248).

As to expression, brain.

In terms of biological role, may play a role during embryogenesis. This chain is Craniofacial development protein 1 (CFDP1), found in Bos taurus (Bovine).